The primary structure comprises 559 residues: WD repeat-containing protein JIP5 (559 aa).

WD repeat units follow at residues 26-67 (QYSD…NYLQ), 77-116 (ADGKKSKKVKFWTVYDIINENKDNADTGSDSGVELIWKTK), 117-156 (RHKGSVRCIALDSDGQFVYTVGTDNVLKKADVLTGKVVKK), 162-201 (DNGGKYTKMVKSPTHSLLILGDENGTVIVLNSETLQETNR), 207-247 (NGDD…ESDF), 265-306 (DQED…LEDQ), 313-347 (AKEESIDCIVPTLQDDNCIWCGCSNGNIYKADIKK), 354-394 (RNHS…SEEE), and 428-470 (DSDG…SDDE). Disordered stretches follow at residues 386–500 (SRNE…LIGL) and 515–559 (EESE…FEGL). Over residues 391-417 (SEEEDDEESESFSDSDSDSDSDSDSDS) the composition is skewed to acidic residues. The segment covering 418–428 (DSDRDRDRDSD) has biased composition (basic and acidic residues). Positions 482–494 (DMDDIDEGSDSSE) are enriched in acidic residues. Positions 520–534 (EGEKLQKKRKNEPSK) are enriched in basic and acidic residues. Over residues 535 to 544 (KNTKNLKKVK) the composition is skewed to basic residues.

It belongs to the WD repeat WDR55 family.

Its subcellular location is the nucleus. It is found in the nucleolus. In Vanderwaltozyma polyspora (strain ATCC 22028 / DSM 70294 / BCRC 21397 / CBS 2163 / NBRC 10782 / NRRL Y-8283 / UCD 57-17) (Kluyveromyces polysporus), this protein is WD repeat-containing protein JIP5 (JIP5).